We begin with the raw amino-acid sequence, 496 residues long: Glycerol kinase 2 (496 aa).

Residue T11 participates in ADP binding. ATP contacts are provided by T11, T12, and S13. T11 contributes to the sn-glycerol 3-phosphate binding site. R15 contributes to the ADP binding site. Residues R81, E82, Y133, and D242 each coordinate sn-glycerol 3-phosphate. Residues R81, E82, Y133, D242, and Q243 each contribute to the glycerol site. 2 residues coordinate ADP: T264 and G307. ATP-binding residues include T264, G307, Q311, and G408. Residues G408 and N412 each coordinate ADP.

It belongs to the FGGY kinase family.

It carries out the reaction glycerol + ATP = sn-glycerol 3-phosphate + ADP + H(+). It participates in polyol metabolism; glycerol degradation via glycerol kinase pathway; sn-glycerol 3-phosphate from glycerol: step 1/1. Its activity is regulated as follows. Inhibited by fructose 1,6-bisphosphate (FBP). Key enzyme in the regulation of glycerol uptake and metabolism. Catalyzes the phosphorylation of glycerol to yield sn-glycerol 3-phosphate. This chain is Glycerol kinase 2, found in Thermotoga maritima (strain ATCC 43589 / DSM 3109 / JCM 10099 / NBRC 100826 / MSB8).